The sequence spans 760 residues: Xaa-Pro dipeptidyl-peptidase (760 aa).

Active-site charge relay system residues include serine 349, aspartate 469, and histidine 499.

It belongs to the peptidase S15 family. In terms of assembly, homodimer.

It is found in the cytoplasm. It carries out the reaction Hydrolyzes Xaa-Pro-|- bonds to release unblocked, N-terminal dipeptides from substrates including Ala-Pro-|-p-nitroanilide and (sequentially) Tyr-Pro-|-Phe-Pro-|-Gly-Pro-|-Ile.. Its function is as follows. Removes N-terminal dipeptides sequentially from polypeptides having unsubstituted N-termini provided that the penultimate residue is proline. The polypeptide is Xaa-Pro dipeptidyl-peptidase (Streptococcus pyogenes serotype M5 (strain Manfredo)).